The sequence spans 588 residues: Arginine--tRNA ligase (588 aa).

The short motif at 126-136 (PNIAKEMHVGH) is the 'HIGH' region element.

The protein belongs to the class-I aminoacyl-tRNA synthetase family. In terms of assembly, monomer.

The protein resides in the cytoplasm. The enzyme catalyses tRNA(Arg) + L-arginine + ATP = L-arginyl-tRNA(Arg) + AMP + diphosphate. This chain is Arginine--tRNA ligase, found in Nostoc sp. (strain PCC 7120 / SAG 25.82 / UTEX 2576).